A 130-amino-acid chain; its full sequence is Early E3B 14.5 kDa protein (130 aa).

An N-terminal signal peptide occupies residues 1 to 19; sequence MKRIVTFVLLIFCALPVLC. The helical transmembrane segment at 53–77 threads the bilayer; the sequence is AWLYAIISVMVFCSTIFALAIYPYL.

It belongs to the adenoviridae E3_14 family. Phosphorylated on serine; O-glycosylated, but not N-glycosylated.

It is found in the host membrane. Down-regulates the EGF receptor and prevents cytolysis by TNF. In Human adenovirus C serotype 6 (HAdV-6), this protein is Early E3B 14.5 kDa protein.